Here is a 106-residue protein sequence, read N- to C-terminus: Nucleoid-associated protein BRADO0764 (106 aa).

Belongs to the YbaB/EbfC family. As to quaternary structure, homodimer.

Its subcellular location is the cytoplasm. It localises to the nucleoid. Its function is as follows. Binds to DNA and alters its conformation. May be involved in regulation of gene expression, nucleoid organization and DNA protection. This is Nucleoid-associated protein BRADO0764 from Bradyrhizobium sp. (strain ORS 278).